The following is a 542-amino-acid chain: Glucose-6-phosphate isomerase 2 (542 aa).

Catalysis depends on Glu353, which acts as the Proton donor. Residues His384 and Lys505 contribute to the active site.

Belongs to the GPI family.

The protein resides in the cytoplasm. It carries out the reaction alpha-D-glucose 6-phosphate = beta-D-fructose 6-phosphate. The protein operates within carbohydrate biosynthesis; gluconeogenesis. Its pathway is carbohydrate degradation; glycolysis; D-glyceraldehyde 3-phosphate and glycerone phosphate from D-glucose: step 2/4. Catalyzes the reversible isomerization of glucose-6-phosphate to fructose-6-phosphate. The protein is Glucose-6-phosphate isomerase 2 of Cupriavidus pinatubonensis (strain JMP 134 / LMG 1197) (Cupriavidus necator (strain JMP 134)).